We begin with the raw amino-acid sequence, 196 residues long: ATP-dependent Clp protease proteolytic subunit 1 (196 aa).

The active-site Nucleophile is the Ser-96. Residue His-121 is part of the active site.

Belongs to the peptidase S14 family. Fourteen ClpP subunits assemble into 2 heptameric rings which stack back to back to give a disk-like structure with a central cavity, resembling the structure of eukaryotic proteasomes.

The protein localises to the cytoplasm. It catalyses the reaction Hydrolysis of proteins to small peptides in the presence of ATP and magnesium. alpha-casein is the usual test substrate. In the absence of ATP, only oligopeptides shorter than five residues are hydrolyzed (such as succinyl-Leu-Tyr-|-NHMec, and Leu-Tyr-Leu-|-Tyr-Trp, in which cleavage of the -Tyr-|-Leu- and -Tyr-|-Trp bonds also occurs).. Cleaves peptides in various proteins in a process that requires ATP hydrolysis. Has a chymotrypsin-like activity. Plays a major role in the degradation of misfolded proteins. This is ATP-dependent Clp protease proteolytic subunit 1 from Prochlorococcus marinus (strain NATL2A).